The primary structure comprises 525 residues: MPKNRGVLDAITRSVIDGSDQESSSSFNSDKEYAAVTKGLSSSRVQKKSSLRQMKSKVKELQSLVNHYRENEAALVSSAKLLSGEIIGYEIKMASLHGKMKSILDENNALKETHKSSAEKRIELVRLPSSKEERNYDEYTLLVNLKKEICAKLQDYKNVQNTVNTKLDEIHTFHEKYYEGLELSLDSKVFDAESSKELAKVRRELNNVRKNSEIKVNNLKMQLLQATKSLEHLKKQAKAKDDYLKCIPELVDKANLTMLSYKKSIANQRETIEALQAELSQQSETKGQIETETQNQVQIPTNVTLVDPFEENNPEDLFAIQEQELQDLRLHKKMADERSRTTHLHLERKNNTIKLLQSYVQSLIQRLPPAQRKHHLGIFQKLGSEKSCPLAPAVASTYAPLLLLSQHSNHQEIDNTPQRLLLAAPDGQSYSEKSTTLNLDYSSRKSYLSRLQPPHIANLKSLTLKTLPRVPTDSPQLPSKDKSQETAKKDDRPKLVANEPVTLDTSTPPVAQSLADSKHCSGLHK.

A disordered region spans residues 467-525; the sequence is LPRVPTDSPQLPSKDKSQETAKKDDRPKLVANEPVTLDTSTPPVAQSLADSKHCSGLHK. The segment covering 479–494 has biased composition (basic and acidic residues); the sequence is SKDKSQETAKKDDRPK.

Derepression of silent mating type loci when overexpressed. The chain is Anti-silencing protein 2 (ASF2) from Saccharomyces cerevisiae (strain ATCC 204508 / S288c) (Baker's yeast).